A 397-amino-acid polypeptide reads, in one-letter code: Succinate--CoA ligase [ADP-forming] subunit beta (397 aa).

The 245-residue stretch at 9–253 (KEILASYGVR…IREENPIEVE (245 aa)) folds into the ATP-grasp domain. ATP is bound by residues K50, 57-59 (GRG), V106, and E116. Mg(2+)-binding residues include N208 and D222. Residues N273 and 330 to 332 (GIV) each bind substrate.

Belongs to the succinate/malate CoA ligase beta subunit family. In terms of assembly, heterotetramer of two alpha and two beta subunits. Mg(2+) serves as cofactor.

The enzyme catalyses succinate + ATP + CoA = succinyl-CoA + ADP + phosphate. The catalysed reaction is GTP + succinate + CoA = succinyl-CoA + GDP + phosphate. It functions in the pathway carbohydrate metabolism; tricarboxylic acid cycle; succinate from succinyl-CoA (ligase route): step 1/1. Functionally, succinyl-CoA synthetase functions in the citric acid cycle (TCA), coupling the hydrolysis of succinyl-CoA to the synthesis of either ATP or GTP and thus represents the only step of substrate-level phosphorylation in the TCA. The beta subunit provides nucleotide specificity of the enzyme and binds the substrate succinate, while the binding sites for coenzyme A and phosphate are found in the alpha subunit. The chain is Succinate--CoA ligase [ADP-forming] subunit beta from Flavobacterium johnsoniae (strain ATCC 17061 / DSM 2064 / JCM 8514 / BCRC 14874 / CCUG 350202 / NBRC 14942 / NCIMB 11054 / UW101) (Cytophaga johnsonae).